Here is a 65-residue protein sequence, read N- to C-terminus: Kassorin-M (65 aa).

The first 22 residues, 1–22 (MLTLKKSMLLLFFLGMVSFSLA), serve as a signal peptide directing secretion. The propeptide occupies 23-51 (DDKREDEAEEGEDKRADEGEEKRAAEKKR). Residues 24-45 (DKREDEAEEGEDKRADEGEEKR) form a disordered region. At Leu-64 the chain carries Leucine amide.

This sequence belongs to the frog skin active peptide (FSAP) family. Brevinin subfamily. Expressed by the skin glands.

Its subcellular location is the secreted. In terms of biological role, induces contraction of smooth muscle in isolated guinea pig urinary bladder (EC50=4.66 nM). Has no antimicrobial activity against the Gram-positive bacterium S.aureus, the Gram-negative bacterium E.coli and the yeast C.albicans. Elicits histamine release from rat peritoneal mast cells. The sequence is that of Kassorin-M from Phlyctimantis maculatus (Red-legged running frog).